We begin with the raw amino-acid sequence, 619 residues long: Polyadenylate-binding protein 1-like (619 aa).

RRM domains are found at residues 11–89 (ASLY…WSQR), 99–175 (GNIF…HFKS), 191–268 (TNIY…RAQK), and 294–370 (VNLY…LAQR). Positions 431–458 (PAPRWTSQPPRPSSAYPPGASMVRPPVV) are disordered. A PABC domain is found at 533 to 610 (QEPLTASMLA…AVAVLQAHQA (78 aa)).

This sequence belongs to the polyadenylate-binding protein type-1 family. As to expression, expressed in ovary and testis. Also expressed in pancreas, liver and thymus, and at lower levels in other somatic tissues including brain and lung.

The protein resides in the cytoplasm. Poly(A)-binding protein involved in oocyte maturation and early embryo development. It is required for cytosolic mRNA polyadenylation and translational activation of maternally stored mRNA in oocytes. This chain is Polyadenylate-binding protein 1-like, found in Homo sapiens (Human).